Here is a 369-residue protein sequence, read N- to C-terminus: Probable dual-specificity RNA methyltransferase RlmN (369 aa).

Residue E108 is the Proton acceptor of the active site. In terms of domain architecture, Radical SAM core spans 114–351 (YPDRATLCIS…LAQGVSCTVR (238 aa)). A disulfide bond links C121 and C362. [4Fe-4S] cluster-binding residues include C128, C132, and C135. S-adenosyl-L-methionine is bound by residues 183–184 (GE), S217, 240–242 (SLH), and N319. C362 serves as the catalytic S-methylcysteine intermediate.

It belongs to the radical SAM superfamily. RlmN family. It depends on [4Fe-4S] cluster as a cofactor.

It is found in the cytoplasm. It carries out the reaction adenosine(2503) in 23S rRNA + 2 reduced [2Fe-2S]-[ferredoxin] + 2 S-adenosyl-L-methionine = 2-methyladenosine(2503) in 23S rRNA + 5'-deoxyadenosine + L-methionine + 2 oxidized [2Fe-2S]-[ferredoxin] + S-adenosyl-L-homocysteine. The catalysed reaction is adenosine(37) in tRNA + 2 reduced [2Fe-2S]-[ferredoxin] + 2 S-adenosyl-L-methionine = 2-methyladenosine(37) in tRNA + 5'-deoxyadenosine + L-methionine + 2 oxidized [2Fe-2S]-[ferredoxin] + S-adenosyl-L-homocysteine. Functionally, specifically methylates position 2 of adenine 2503 in 23S rRNA and position 2 of adenine 37 in tRNAs. The chain is Probable dual-specificity RNA methyltransferase RlmN from Rhodococcus jostii (strain RHA1).